The sequence spans 251 residues: MSLNADYQKLEPGNEVRLFSVDGTAFGMSDVLRFHAHNIAHTPEEIEAAGGDENKLPAKSIWWQGEEYKAWPCQVEGIEATTDGTSPQPKLTVANLDSSISALCLAYDDLLQAKVTIHDTLAKYLDARNFPQGNPTADPSQEKLKVFYIDARNTETDEVVEFILSSPMDLQGRMIPTRQLHSLCSWCIRNKYRTGDGCDYAGTRYFDKHNNPVDDPSLDECNGTLTACKLRHGDSNELPFGGFPGTSLIRS.

Cys-184, Cys-198, Cys-221, and Cys-228 together coordinate [4Fe-4S] cluster.

Belongs to the lambda-like tail tip protein L family. [4Fe-4S] cluster is required as a cofactor.

The protein resides in the virion. The protein localises to the host cytoplasm. In terms of biological role, part of the distal tail tip complex which plays a role in DNA injection during entry, and in tail assembly initiation during exit. The tail tip complex is assembled successively with three tail central fiber proteins J, one tail tip protein I, one tail tip protein L and one tail tip protein K. The tail tip complex interacts with tail measure protein to initiate tail tube assembly. The formation of the tail tip complex is completed by the addition of tail tip protein M, which is followed by tail tube polymerization. The polypeptide is Tail tip protein L (Escherichia phage N15 (Bacteriophage N15)).